The sequence spans 32 residues: Basic phospholipase A2 (32 aa).

3 residues coordinate Ca(2+): Tyr26, Gly28, and Gly30.

Belongs to the phospholipase A2 family. Group II subfamily. Ca(2+) is required as a cofactor. As to expression, expressed by the venom gland.

It localises to the secreted. It catalyses the reaction a 1,2-diacyl-sn-glycero-3-phosphocholine + H2O = a 1-acyl-sn-glycero-3-phosphocholine + a fatty acid + H(+). Functionally, snake venom phospholipase A2 (PLA2) that inhibits neuromuscular transmission by blocking acetylcholine release from the nerve termini. PLA2 catalyzes the calcium-dependent hydrolysis of the 2-acyl groups in 3-sn-phosphoglycerides. The polypeptide is Basic phospholipase A2 (Gloydius halys (Chinese water mocassin)).